A 272-amino-acid chain; its full sequence is Putative pyruvate, phosphate dikinase regulatory protein (272 aa).

149–156 (GVSRTSKT) provides a ligand contact to ADP.

This sequence belongs to the pyruvate, phosphate/water dikinase regulatory protein family. PDRP subfamily.

The catalysed reaction is N(tele)-phospho-L-histidyl/L-threonyl-[pyruvate, phosphate dikinase] + ADP = N(tele)-phospho-L-histidyl/O-phospho-L-threonyl-[pyruvate, phosphate dikinase] + AMP + H(+). It carries out the reaction N(tele)-phospho-L-histidyl/O-phospho-L-threonyl-[pyruvate, phosphate dikinase] + phosphate + H(+) = N(tele)-phospho-L-histidyl/L-threonyl-[pyruvate, phosphate dikinase] + diphosphate. Bifunctional serine/threonine kinase and phosphorylase involved in the regulation of the pyruvate, phosphate dikinase (PPDK) by catalyzing its phosphorylation/dephosphorylation. The chain is Putative pyruvate, phosphate dikinase regulatory protein from Lactiplantibacillus plantarum (strain ATCC BAA-793 / NCIMB 8826 / WCFS1) (Lactobacillus plantarum).